Consider the following 220-residue polypeptide: Thiopurine S-methyltransferase (220 aa).

Residues tryptophan 10, leucine 45, glutamate 66, and arginine 123 each coordinate S-adenosyl-L-methionine.

Belongs to the class I-like SAM-binding methyltransferase superfamily. TPMT family.

It localises to the cytoplasm. It carries out the reaction S-adenosyl-L-methionine + a thiopurine = S-adenosyl-L-homocysteine + a thiopurine S-methylether.. This chain is Thiopurine S-methyltransferase, found in Pseudomonas syringae pv. tomato (strain ATCC BAA-871 / DC3000).